The following is a 200-amino-acid chain: uncharacterized protein (200 aa).

Residues 1 to 21 (MSNSAQRDARNSRDESARASD) form a disordered region. The span at 7-21 (RDARNSRDESARASD) shows a compositional bias: basic and acidic residues.

This is an uncharacterized protein from Mycobacterium tuberculosis (strain ATCC 25618 / H37Rv).